The chain runs to 345 residues: UPF0324 membrane protein HH_1161 (345 aa).

10 consecutive transmembrane segments (helical) span residues 7 to 29, 33 to 50, 90 to 112, 122 to 141, 154 to 176, 186 to 208, 215 to 237, 262 to 281, 293 to 312, and 322 to 344; these read GFLY…SATL, LSPL…SPFY, LGLN…AIFI, ISLL…ILAL, VALG…IYYA, WGIF…AISP, IIVK…YIIF, LYIP…NSFI, FASK…QIDW, and TFAL…VYIM.

The protein belongs to the UPF0324 family.

The protein resides in the cell membrane. This is UPF0324 membrane protein HH_1161 from Helicobacter hepaticus (strain ATCC 51449 / 3B1).